The sequence spans 199 residues: NAD(P)H dehydrogenase (quinone) (199 aa).

Residues 4-190 (MLVLYYSAYG…DGARFQGRRV (187 aa)) form the Flavodoxin-like domain. FMN is bound by residues 10–15 (SAYGYM) and 78–80 (TRY). An NAD(+)-binding site is contributed by tyrosine 12. Tryptophan 98 serves as a coordination point for substrate. FMN-binding positions include 113-119 (STATQHG) and histidine 134. Residues 158–181 (GAPYGMTTTADGDGSRQPSAQELD) are disordered. Polar residues predominate over residues 163 to 177 (MTTTADGDGSRQPSA).

This sequence belongs to the WrbA family. Requires FMN as cofactor.

It catalyses the reaction a quinone + NADH + H(+) = a quinol + NAD(+). The enzyme catalyses a quinone + NADPH + H(+) = a quinol + NADP(+). This is NAD(P)H dehydrogenase (quinone) from Brucella abortus (strain S19).